Reading from the N-terminus, the 499-residue chain is Glycerol kinase (499 aa).

Threonine 11 provides a ligand contact to ADP. Residues threonine 11, serine 12, and serine 13 each coordinate ATP. Threonine 11 serves as a coordination point for sn-glycerol 3-phosphate. Arginine 15 is a binding site for ADP. Residues arginine 81, glutamate 82, tyrosine 133, and aspartate 242 each coordinate sn-glycerol 3-phosphate. 5 residues coordinate glycerol: arginine 81, glutamate 82, tyrosine 133, aspartate 242, and glutamine 243. Positions 264 and 309 each coordinate ADP. Threonine 264, glycine 309, glutamine 313, and glycine 414 together coordinate ATP. ADP-binding residues include glycine 414 and asparagine 418.

This sequence belongs to the FGGY kinase family.

The catalysed reaction is glycerol + ATP = sn-glycerol 3-phosphate + ADP + H(+). The protein operates within polyol metabolism; glycerol degradation via glycerol kinase pathway; sn-glycerol 3-phosphate from glycerol: step 1/1. Inhibited by fructose 1,6-bisphosphate (FBP). Key enzyme in the regulation of glycerol uptake and metabolism. Catalyzes the phosphorylation of glycerol to yield sn-glycerol 3-phosphate. The chain is Glycerol kinase from Methylibium petroleiphilum (strain ATCC BAA-1232 / LMG 22953 / PM1).